A 379-amino-acid chain; its full sequence is Protein FAM53B (379 aa).

2 disordered regions span residues 206 to 257 (CPAE…HKQR) and 302 to 348 (AQND…AGKE). The span at 212 to 236 (SPESTPELQRRSGQSGLARSRSQPC) shows a compositional bias: polar residues. Over residues 239–249 (NHQKIGVKRRR) the composition is skewed to basic residues. The Nuclear localization signal signature appears at 246–249 (KRRR). Residues 326 to 342 (QSDSSSADALIHQSESS) show a composition bias toward polar residues.

It belongs to the FAM53 family. In terms of assembly, interacts with ctnnb1. In terms of tissue distribution, mainly expressed in proliferating tissues.

It is found in the nucleus. Its function is as follows. Acts as a regulator of Wnt signaling pathway by regulating beta-catenin (ctnnb1) nuclear localization. Required for appendage regeneration by regulating cell proliferation. The chain is Protein FAM53B from Danio rerio (Zebrafish).